Here is a 124-residue protein sequence, read N- to C-terminus: Acidic phospholipase A2 A (124 aa).

7 cysteine pairs are disulfide-bonded: Cys26–Cys116, Cys28–Cys44, Cys43–Cys95, Cys49–Cys124, Cys50–Cys88, Cys57–Cys81, and Cys75–Cys86. Ca(2+) contacts are provided by Tyr27, Gly29, and Gly31. The active site involves His47. Asp48 provides a ligand contact to Ca(2+). Asp89 is a catalytic residue.

It belongs to the phospholipase A2 family. Group II subfamily. D49 sub-subfamily. It depends on Ca(2+) as a cofactor. In terms of tissue distribution, expressed by the venom gland.

Its subcellular location is the secreted. It catalyses the reaction a 1,2-diacyl-sn-glycero-3-phosphocholine + H2O = a 1-acyl-sn-glycero-3-phosphocholine + a fatty acid + H(+). In terms of biological role, PLA2 catalyzes the calcium-dependent hydrolysis of the 2-acyl groups in 3-sn-phosphoglycerides. The protein is Acidic phospholipase A2 A of Gloydius halys (Chinese water mocassin).